The chain runs to 153 residues: UPF0756 membrane protein BCQ_4399 (153 aa).

Helical transmembrane passes span 8 to 28, 54 to 74, 87 to 107, and 117 to 137; these read FLFI…TVAI, LGVT…EIGF, WIAL…VQLL, and LVFG…GPLI.

This sequence belongs to the UPF0756 family.

The protein localises to the cell membrane. The polypeptide is UPF0756 membrane protein BCQ_4399 (Bacillus cereus (strain Q1)).